The sequence spans 291 residues: Cell division protein FtsX (291 aa).

Residues 1 to 18 lie on the Cytoplasmic side of the membrane; it reads MSSNFDKFQKRRLISSYF. The helical transmembrane segment at 19–39 threads the bilayer; sequence SVVLSVFLVLFLLGVLGLFII. Topologically, residues 40-162 are periplasmic; that stretch reads NSKKLADDFK…VNLVNDNIKK (123 aa). A helical membrane pass occupies residues 163–183; it reads VSMWILIISGFLTVIAVLLIN. Residues 184-220 lie on the Cytoplasmic side of the membrane; that stretch reads SSLRLSIHSNRFIIKTMQMVGATKSFIRKPFVMRSVK. A helical membrane pass occupies residues 221–241; it reads LGMLGALLAIIALIGLLFYVE. At 242 to 253 the chain is on the periplasmic side; it reads TNFPGLGILEDK. The helical transmembrane segment at 254–274 threads the bilayer; that stretch reads ALIGLVLLAVFGLGVLITWVS. Residues 275 to 291 lie on the Cytoplasmic side of the membrane; the sequence is THFATQRFLNLRTDDLY.

Belongs to the ABC-4 integral membrane protein family. FtsX subfamily.

It localises to the cell inner membrane. Functionally, required for cell division and gliding motility. The polypeptide is Cell division protein FtsX (Flavobacterium johnsoniae (strain ATCC 17061 / DSM 2064 / JCM 8514 / BCRC 14874 / CCUG 350202 / NBRC 14942 / NCIMB 11054 / UW101) (Cytophaga johnsonae)).